A 577-amino-acid polypeptide reads, in one-letter code: Arginine--tRNA ligase (577 aa).

Residues Pro-122–His-132 carry the 'HIGH' region motif.

Belongs to the class-I aminoacyl-tRNA synthetase family. In terms of assembly, monomer.

The protein localises to the cytoplasm. It carries out the reaction tRNA(Arg) + L-arginine + ATP = L-arginyl-tRNA(Arg) + AMP + diphosphate. The chain is Arginine--tRNA ligase from Salmonella paratyphi A (strain ATCC 9150 / SARB42).